The primary structure comprises 180 residues: Segregation and condensation protein B (180 aa).

This sequence belongs to the ScpB family. In terms of assembly, homodimer. Homodimerization may be required to stabilize the binding of ScpA to the Smc head domains. Component of a cohesin-like complex composed of ScpA, ScpB and the Smc homodimer, in which ScpA and ScpB bind to the head domain of Smc. The presence of the three proteins is required for the association of the complex with DNA.

It localises to the cytoplasm. Participates in chromosomal partition during cell division. May act via the formation of a condensin-like complex containing Smc and ScpA that pull DNA away from mid-cell into both cell halves. The protein is Segregation and condensation protein B of Staphylococcus aureus (strain MSSA476).